A 147-amino-acid chain; its full sequence is Globin (147 aa).

The 146-residue stretch at 2 to 147 (SFSAAQVDTV…SVANGIGQYQ (146 aa)) folds into the Globin domain. Heme b-binding residues include His-64 and His-95.

Belongs to the globin family. As to quaternary structure, homodimer or homooligomer.

The protein is Globin of Aequiyoldia eightsii (Antarctic yoldia).